Reading from the N-terminus, the 60-residue chain is UPF0337 protein SACOL1680 (60 aa).

The protein belongs to the UPF0337 (CsbD) family.

The protein is UPF0337 protein SACOL1680 of Staphylococcus aureus (strain COL).